The sequence spans 150 residues: Ribosome maturation factor RimP (150 aa).

This sequence belongs to the RimP family.

It is found in the cytoplasm. In terms of biological role, required for maturation of 30S ribosomal subunits. The chain is Ribosome maturation factor RimP from Thermotoga neapolitana (strain ATCC 49049 / DSM 4359 / NBRC 107923 / NS-E).